The chain runs to 254 residues: MKYEEINFKVPVESPYYPNYSQCVIERIYSILRNQKDMGDDRIIINTNLKKGLPLENINKIAGPMIEAWAEEVFSGIRDNRDNQYNLINVEAQERLGISDIILQFQVNNNVITGNVDVKATSNDIPDSGKSPNITSFSRIRTAYVKDPNFIFIILSIKHSVYVKRNEYTNLMDGIMQIIDFNVYDLKYISDSDISYNPALGTGQIQIKDIHYVSSQKRTTWQMCQLLDLKYLRSKKRTIEQFYNEAKRNKWIKD.

It catalyses the reaction Endonucleolytic cleavage of DNA to give specific double-stranded fragments with terminal 5'-phosphates.. Functionally, a P subtype restriction enzyme that recognizes the double-stranded sequence 5'-GTTAAC-3' and cleaves after T-3. This is Type II restriction enzyme HpaI (hpaIR) from Haemophilus parainfluenzae.